Here is a 388-residue protein sequence, read N- to C-terminus: Nitric oxide reductase FlRd-NAD(+) reductase (388 aa).

This sequence belongs to the FAD-dependent oxidoreductase family. FAD is required as a cofactor.

It localises to the cytoplasm. It catalyses the reaction 2 reduced [nitric oxide reductase rubredoxin domain] + NAD(+) + H(+) = 2 oxidized [nitric oxide reductase rubredoxin domain] + NADH. The protein operates within nitrogen metabolism; nitric oxide reduction. In terms of biological role, one of at least two accessory proteins for anaerobic nitric oxide (NO) reductase. Reduces the rubredoxin moiety of NO reductase. In Aeromonas salmonicida (strain A449), this protein is Nitric oxide reductase FlRd-NAD(+) reductase.